Here is a 266-residue protein sequence, read N- to C-terminus: F-box only protein 50 (266 aa).

Basic and acidic residues predominate over residues 1 to 16; it reads MEKTQDRDTLSGRMEA. The tract at residues 1–53 is disordered; sequence MEKTQDRDTLSGRMEAEGSLNSEELPPHPQSPPPPPSPRSPTSPVTPELPQPN. Positions 27 to 41 are enriched in pro residues; that stretch reads PHPQSPPPPPSPRSP. Residues S31, S37, S40, and S43 each carry the phosphoserine modification. At T46 the chain carries Phosphothreonine. One can recognise an FBA domain in the interval 86 to 264; it reads LFLERPLYRN…VTDSSVSVQL (179 aa).

In terms of tissue distribution, strongly expressed in kidney. Weakly expressed in stomach, colon, duodenum and prostate.

The protein resides in the cytoplasm. Functionally, promotes cell proliferation. The polypeptide is F-box only protein 50 (Nccrp1) (Mus musculus (Mouse)).